A 582-amino-acid chain; its full sequence is Adenine deaminase (582 aa).

This sequence belongs to the metallo-dependent hydrolases superfamily. Adenine deaminase family. Mn(2+) is required as a cofactor.

It catalyses the reaction adenine + H2O + H(+) = hypoxanthine + NH4(+). This is Adenine deaminase from Oceanobacillus iheyensis (strain DSM 14371 / CIP 107618 / JCM 11309 / KCTC 3954 / HTE831).